We begin with the raw amino-acid sequence, 415 residues long: NADH-quinone oxidoreductase subunit D (415 aa).

The protein belongs to the complex I 49 kDa subunit family. As to quaternary structure, NDH-1 is composed of 14 different subunits. Subunits NuoB, C, D, E, F, and G constitute the peripheral sector of the complex.

It is found in the cell inner membrane. The catalysed reaction is a quinone + NADH + 5 H(+)(in) = a quinol + NAD(+) + 4 H(+)(out). NDH-1 shuttles electrons from NADH, via FMN and iron-sulfur (Fe-S) centers, to quinones in the respiratory chain. The immediate electron acceptor for the enzyme in this species is believed to be ubiquinone. Couples the redox reaction to proton translocation (for every two electrons transferred, four hydrogen ions are translocated across the cytoplasmic membrane), and thus conserves the redox energy in a proton gradient. The chain is NADH-quinone oxidoreductase subunit D from Myxococcus xanthus (strain DK1622).